A 241-amino-acid polypeptide reads, in one-letter code: Ribose-5-phosphate isomerase A (241 aa).

Residues 28 to 31, 83 to 86, and 96 to 99 each bind substrate; these read TGST, DGAD, and KGGG. Residue Glu105 is the Proton acceptor of the active site. Lys123 serves as a coordination point for substrate.

Belongs to the ribose 5-phosphate isomerase family. Homodimer.

It carries out the reaction aldehydo-D-ribose 5-phosphate = D-ribulose 5-phosphate. It participates in carbohydrate degradation; pentose phosphate pathway; D-ribose 5-phosphate from D-ribulose 5-phosphate (non-oxidative stage): step 1/1. Catalyzes the reversible conversion of ribose-5-phosphate to ribulose 5-phosphate. This is Ribose-5-phosphate isomerase A from Bradyrhizobium diazoefficiens (strain JCM 10833 / BCRC 13528 / IAM 13628 / NBRC 14792 / USDA 110).